The following is a 240-amino-acid chain: Nudix hydrolase 3 (240 aa).

Residues 50-190 (NSAMSVLIPL…RMKYTLPSFD (141 aa)) form the Nudix hydrolase domain. Residues 89–110 (GRMDPGETTTETALRETFEEIG) carry the Nudix box motif. 2 residues coordinate Mg(2+): E104 and E108.

This sequence belongs to the Nudix hydrolase family. PCD1 subfamily. It depends on Mn(2+) as a cofactor. Requires Mg(2+) as cofactor.

Its function is as follows. Probably mediates the hydrolysis of some nucleoside diphosphate derivatives. This is Nudix hydrolase 3 (ndx-3) from Caenorhabditis elegans.